Here is a 190-residue protein sequence, read N- to C-terminus: Protein A52 (190 aa).

This sequence belongs to the orthopoxvirus A52R protein family. In terms of assembly, interacts with host TRAF6 and IRAK2.

Functionally, bcl-2-like protein which targets host toll-like receptor signaling complexes to suppress innate immune response. Interacts with host TRAF6 to activate p38 and subsequently induce the expression of several cytokines such as IL-10. Also associates with host IRAK2 to inhibit NF-kappa-B signaling. This is Protein A52 from Homo sapiens (Human).